Here is a 327-residue protein sequence, read N- to C-terminus: Fumigatonoid B endoperoxide isomerase nvfE (327 aa).

The segment at 1 to 22 (MGRDQVSHKRSQNSNVSEIPDL) is disordered. Fe cation-binding residues include His-152, Asp-154, and His-234.

Belongs to the PhyH family. In terms of assembly, homodimer. It depends on Fe cation as a cofactor.

It carries out the reaction fumigatonoid B = fumigatonoid C. The protein operates within secondary metabolite biosynthesis; terpenoid biosynthesis. Fumigatonoid B endoperoxide isomerase; part of the gene cluster that mediates the biosynthesis of novofumigatonin, a heavily oxygenated meroterpenoid containing a unique orthoester moiety. The first step of the pathway is the synthesis of 3,5-dimethylorsellinic acid (DMOA) by the polyketide synthase nvfA via condensation of one acetyl-CoA starter unit with 3 malonyl-CoA units and 2 methylations. DMOA is then converted to farnesyl-DMOA by the farnesyltransferase nvfB. Epoxydation by FAD-dependent monooxygenase nvfK, followed by a protonation-initiated cyclization catalyzed by the terpene cyclase nvfL leads to the production of asnavolin H. The short chain dehydrogenase nvfC then as a 3-OH dehydrogenase of asnovolin H to yield chemesin D. There are two branches to synthesize asnovolin A from chemesin D. In one branch, chemesin D undergoes Baeyer-Villiger oxidation by nvfH, methylation by nvfJ, and enoyl reduction by the nvfM D enoylreductase that reduces the double bond between C-5'and C-6', to form respectively asnovolin I, asnovolin K, and asnovolin A. In the other branch, the methylation precedes the Baeyer-Villiger oxidation and the enoyl reduction to yield asnovolin A via the asnovolin J intermediate. Asnovolin A is further converted to fumigatonoid A by the Fe(II)/2-oxoglutarate-dependent dioxygenase nvfI that catalyzes an endoperoxidation reaction. The alpha/beta hydrolase nvfD then acts as an epimerase that converts fumigatonoid A to its C-5' epimer, which then undergoes spontaneous or nvfD-catalyzed lactonization. The following step utilizes the ketoreductase nvfG to produce fumigatonoid B. The dioxygenase nvfE further converts fumigatonoid B into fumigatonoid C. Finally the Fe(II)/2-oxoglutarate-dependent dioxygenase nvfF catalyzes two rounds of oxidation to transform fumigatonoid C into the end product, novofumigatonin A. The polypeptide is Fumigatonoid B endoperoxide isomerase nvfE (Aspergillus novofumigatus (strain IBT 16806)).